A 177-amino-acid chain; its full sequence is Large ribosomal subunit protein bL9 (177 aa).

The segment at 151–177 (EDEEIAEAAPVAEAQAEADGHSTEETA) is disordered. Over residues 157 to 167 (EAAPVAEAQAE) the composition is skewed to low complexity. The segment covering 168–177 (ADGHSTEETA) has biased composition (basic and acidic residues).

Belongs to the bacterial ribosomal protein bL9 family.

In terms of biological role, binds to the 23S rRNA. This is Large ribosomal subunit protein bL9 from Solidesulfovibrio magneticus (strain ATCC 700980 / DSM 13731 / RS-1) (Desulfovibrio magneticus).